The following is a 202-amino-acid chain: NADH-quinone oxidoreductase subunit C (202 aa).

It belongs to the complex I 30 kDa subunit family. As to quaternary structure, NDH-1 is composed of 14 different subunits. Subunits NuoB, C, D, E, F, and G constitute the peripheral sector of the complex.

It is found in the cell inner membrane. It carries out the reaction a quinone + NADH + 5 H(+)(in) = a quinol + NAD(+) + 4 H(+)(out). In terms of biological role, NDH-1 shuttles electrons from NADH, via FMN and iron-sulfur (Fe-S) centers, to quinones in the respiratory chain. The immediate electron acceptor for the enzyme in this species is believed to be ubiquinone. Couples the redox reaction to proton translocation (for every two electrons transferred, four hydrogen ions are translocated across the cytoplasmic membrane), and thus conserves the redox energy in a proton gradient. This is NADH-quinone oxidoreductase subunit C from Brucella abortus (strain 2308).